Reading from the N-terminus, the 331-residue chain is Pseudouridylate synthase TRUB2, mitochondrial (331 aa).

The N-terminal 10 residues, 1 to 10 (MGSAGLSRLH), are a transit peptide targeting the mitochondrion. The active-site Nucleophile is Asp98. Residues 296-331 (KSLSPGLDTKQLPSPGWSWDSQGPSSTLGLERGAGQ) are disordered. Residues 314–323 (WDSQGPSSTL) are compositionally biased toward polar residues.

Belongs to the pseudouridine synthase TruB family. As to quaternary structure, forms a regulatory protein-RNA complex, consisting of RCC1L, NGRN, RPUSD3, RPUSD4, TRUB2, FASTKD2 and 16S mt-rRNA.

The protein localises to the mitochondrion matrix. It carries out the reaction a uridine in mRNA = a pseudouridine in mRNA. The catalysed reaction is uridine(55) in tRNA = pseudouridine(55) in tRNA. Its function is as follows. Minor enzyme contributing to the isomerization of uridine to pseudouridine (pseudouridylation) of specific mitochondrial mRNAs (mt-mRNAs) such as COXI and COXIII mt-mRNAs. As a component of a functional protein-RNA module, consisting of RCC1L, NGRN, RPUSD3, RPUSD4, TRUB2, FASTKD2 and 16S mitochondrial ribosomal RNA (16S mt-rRNA), controls 16S mt-rRNA abundance and is required for intra-mitochondrial translation. Also catalyzes pseudouridylation of some tRNAs, including synthesis of pseudouridine(55) from uracil-55, in the psi GC loop of a subset of tRNAs. The chain is Pseudouridylate synthase TRUB2, mitochondrial from Homo sapiens (Human).